Reading from the N-terminus, the 112-residue chain is Small ribosomal subunit protein bS6 (112 aa).

It belongs to the bacterial ribosomal protein bS6 family.

Binds together with bS18 to 16S ribosomal RNA. The sequence is that of Small ribosomal subunit protein bS6 from Chlamydia abortus (strain DSM 27085 / S26/3) (Chlamydophila abortus).